The chain runs to 301 residues: Probable 5-dehydro-4-deoxyglucarate dehydratase (301 aa).

It belongs to the DapA family.

It carries out the reaction 5-dehydro-4-deoxy-D-glucarate + H(+) = 2,5-dioxopentanoate + CO2 + H2O. It participates in carbohydrate acid metabolism; D-glucarate degradation; 2,5-dioxopentanoate from D-glucarate: step 2/2. The chain is Probable 5-dehydro-4-deoxyglucarate dehydratase from Cereibacter sphaeroides (strain KD131 / KCTC 12085) (Rhodobacter sphaeroides).